The chain runs to 199 residues: Probable V-type proton ATPase 20 kDa proteolipid subunit (199 aa).

Over 1–3 (MSL) the chain is Vacuolar. The chain crosses the membrane as a helical span at residues 4–24 (FSTSLWTTTVMSIIVGLYMLF). The Cytoplasmic portion of the chain corresponds to 25 to 46 (HNSGESFDFGSFLLDTSPYTWG). Residues 47-67 (LLGIASCVAFGIIGAAWGIFI) traverse the membrane as a helical segment. Residues 68-86 (CGTSILGGAVKAPRIKTKN) are Vacuolar-facing. A helical membrane pass occupies residues 87–107 (LISIIFCEVVAIYSLIIAIVF). Residues 108–130 (SAKINDINPAGFYTKSHYYTGFA) are Cytoplasmic-facing. The chain crosses the membrane as a helical span at residues 131–151 (LFWGGITVGLCNLICGVCVGI). The Vacuolar portion of the chain corresponds to 152 to 170 (TGSSAALADAQDASLFVKV). A helical membrane pass occupies residues 171 to 191 (LVVEIFGSVLGLFGLIVGLLI). Residues 192–199 (GGKASDFS) lie on the Cytoplasmic side of the membrane.

Belongs to the V-ATPase proteolipid subunit family. As to quaternary structure, V-ATPase is a heteromultimeric enzyme composed of a peripheral catalytic V1 complex (components A to H) attached to an integral membrane V0 proton pore complex (components: a, c, c', c'', d, e, f and VOA1). The decameric c-ring forms the proton-conducting pore, and is composed of eight proteolipid subunits c, one subunit c' and one subunit c''.

It localises to the vacuole membrane. Functionally, proton-conducting pore forming subunit of the V0 complex of vacuolar(H+)-ATPase (V-ATPase), a multisubunit enzyme composed of a peripheral complex (V1) that hydrolyzes ATP and a membrane integral complex (V0) that translocates protons. V-ATPase is responsible for acidifying and maintaining the pH of intracellular compartments. This Schizosaccharomyces pombe (strain 972 / ATCC 24843) (Fission yeast) protein is Probable V-type proton ATPase 20 kDa proteolipid subunit (vma16).